We begin with the raw amino-acid sequence, 343 residues long: Selenide, water dikinase (343 aa).

Sec16 is an active-site residue. Residue Sec16 is a non-standard amino acid, selenocysteine. Residues Lys19 and 46–48 (GAE) each bind ATP. Asp49 serves as a coordination point for Mg(2+). Residues Asp66, Asp89, and 137-139 (GHT) each bind ATP. Position 89 (Asp89) interacts with Mg(2+). Asp225 provides a ligand contact to Mg(2+).

It belongs to the selenophosphate synthase 1 family. Class I subfamily. In terms of assembly, homodimer. It depends on Mg(2+) as a cofactor.

It catalyses the reaction hydrogenselenide + ATP + H2O = selenophosphate + AMP + phosphate + 2 H(+). Synthesizes selenophosphate from selenide and ATP. The polypeptide is Selenide, water dikinase (Citrifermentans bemidjiense (strain ATCC BAA-1014 / DSM 16622 / JCM 12645 / Bem) (Geobacter bemidjiensis)).